The chain runs to 311 residues: 4-hydroxy-3-methylbut-2-enyl diphosphate reductase (311 aa).

Position 14 (Cys14) interacts with [4Fe-4S] cluster. Residues His43 and His76 each coordinate (2E)-4-hydroxy-3-methylbut-2-enyl diphosphate. 2 residues coordinate dimethylallyl diphosphate: His43 and His76. The isopentenyl diphosphate site is built by His43 and His76. Cys98 contacts [4Fe-4S] cluster. His126 lines the (2E)-4-hydroxy-3-methylbut-2-enyl diphosphate pocket. Position 126 (His126) interacts with dimethylallyl diphosphate. His126 contacts isopentenyl diphosphate. The active-site Proton donor is the Glu128. Residue Thr166 coordinates (2E)-4-hydroxy-3-methylbut-2-enyl diphosphate. Cys196 is a binding site for [4Fe-4S] cluster. (2E)-4-hydroxy-3-methylbut-2-enyl diphosphate is bound by residues Ser224, Ser225, Asn226, and Ser268. The dimethylallyl diphosphate site is built by Ser224, Ser225, Asn226, and Ser268. Positions 224, 225, 226, and 268 each coordinate isopentenyl diphosphate.

It belongs to the IspH family. It depends on [4Fe-4S] cluster as a cofactor.

It catalyses the reaction isopentenyl diphosphate + 2 oxidized [2Fe-2S]-[ferredoxin] + H2O = (2E)-4-hydroxy-3-methylbut-2-enyl diphosphate + 2 reduced [2Fe-2S]-[ferredoxin] + 2 H(+). It carries out the reaction dimethylallyl diphosphate + 2 oxidized [2Fe-2S]-[ferredoxin] + H2O = (2E)-4-hydroxy-3-methylbut-2-enyl diphosphate + 2 reduced [2Fe-2S]-[ferredoxin] + 2 H(+). The protein operates within isoprenoid biosynthesis; dimethylallyl diphosphate biosynthesis; dimethylallyl diphosphate from (2E)-4-hydroxy-3-methylbutenyl diphosphate: step 1/1. It participates in isoprenoid biosynthesis; isopentenyl diphosphate biosynthesis via DXP pathway; isopentenyl diphosphate from 1-deoxy-D-xylulose 5-phosphate: step 6/6. Catalyzes the conversion of 1-hydroxy-2-methyl-2-(E)-butenyl 4-diphosphate (HMBPP) into a mixture of isopentenyl diphosphate (IPP) and dimethylallyl diphosphate (DMAPP). Acts in the terminal step of the DOXP/MEP pathway for isoprenoid precursor biosynthesis. This chain is 4-hydroxy-3-methylbut-2-enyl diphosphate reductase, found in Chromobacterium violaceum (strain ATCC 12472 / DSM 30191 / JCM 1249 / CCUG 213 / NBRC 12614 / NCIMB 9131 / NCTC 9757 / MK).